We begin with the raw amino-acid sequence, 229 residues long: MNQWEELQESVGFDFKNVELLKQAFTHSSYVNEHRRENVKDNERLEFLGDAVLELTVSDYLFNKYPDMAEGHMTKMRAAIVCEPSLVEFAEAVHFSKYVRLGKGEEKAGGRTRPALLADVFESFIGALYLDNGIDKVVTFLERVIFPKIDAGAYLQTVDYKTQLQEIVQRDRDVLIEYDILGETGPAHNKAFDAQVIVNGQVLGKGSGRTKKQAEQSAAQFAINKLIHR.

The RNase III domain occupies 4-133; it reads WEELQESVGF…FIGALYLDNG (130 aa). Residue Glu46 participates in Mg(2+) binding. Asp50 is an active-site residue. The Mg(2+) site is built by Asp119 and Glu122. The active site involves Glu122. The 70-residue stretch at 159–228 folds into the DRBM domain; that stretch reads DYKTQLQEIV…AQFAINKLIH (70 aa).

It belongs to the ribonuclease III family. Homodimer. Requires Mg(2+) as cofactor.

It is found in the cytoplasm. The catalysed reaction is Endonucleolytic cleavage to 5'-phosphomonoester.. Functionally, digests double-stranded RNA. Involved in the processing of primary rRNA transcript to yield the immediate precursors to the large and small rRNAs (23S and 16S). Processes some mRNAs, and tRNAs when they are encoded in the rRNA operon. Processes pre-crRNA and tracrRNA of type II CRISPR loci if present in the organism. The sequence is that of Ribonuclease 3 from Listeria monocytogenes serovar 1/2a (strain ATCC BAA-679 / EGD-e).